The primary structure comprises 149 residues: Transthyretin (149 aa).

A signal peptide spans methionine 1–alanine 20. A Sulfocysteine modification is found at cysteine 32. Lysine 37 contributes to the L-thyroxine binding site. Glutamate 64 is subject to 4-carboxyglutamate. L-thyroxine contacts are provided by glutamate 76 and serine 139.

Belongs to the transthyretin family. Homotetramer. Dimer of dimers. In the homotetramer, subunits assemble around a central channel that can accommodate two ligand molecules. Interacts with RBP4. Post-translationally, sulfonation of the reactive cysteine Cys-32 enhances the stability of the native conformation of TTR, avoiding misassembly of the protein leading to amyloid formation. Detected in plasma (at protein level). Detected in liver.

It localises to the secreted. Thyroid hormone-binding protein. Probably transports thyroxine from the bloodstream to the brain. The sequence is that of Transthyretin (TTR) from Petaurus breviceps (Australian sugar glider).